We begin with the raw amino-acid sequence, 340 residues long: Toxin coregulated pilus biosynthesis protein E (340 aa).

3 consecutive transmembrane segments (helical) span residues 108-131 (AISS…GYSV), 146-161 (WPGV…FSLY), and 312-333 (NISL…FSLV).

It belongs to the GSP F family.

The protein localises to the cell inner membrane. Functionally, probably involved in cholera toxin receptor (GM1) interaction in order to bring the cells within close proximity of the ganglioside for efficient toxin delivery. This Vibrio cholerae serotype O1 (strain ATCC 39315 / El Tor Inaba N16961) protein is Toxin coregulated pilus biosynthesis protein E (tcpE).